A 314-amino-acid polypeptide reads, in one-letter code: UDP-N-acetylenolpyruvoylglucosamine reductase (314 aa).

One can recognise an FAD-binding PCMH-type domain in the interval 25–191; that stretch reads KIGGPADLFA…VRVGMELRWG (167 aa). Residue Arg170 is part of the active site. Ser220 serves as the catalytic Proton donor. Glu291 is an active-site residue.

The protein belongs to the MurB family. The cofactor is FAD.

It is found in the cytoplasm. It carries out the reaction UDP-N-acetyl-alpha-D-muramate + NADP(+) = UDP-N-acetyl-3-O-(1-carboxyvinyl)-alpha-D-glucosamine + NADPH + H(+). The protein operates within cell wall biogenesis; peptidoglycan biosynthesis. Its function is as follows. Cell wall formation. This is UDP-N-acetylenolpyruvoylglucosamine reductase from Heliobacterium modesticaldum (strain ATCC 51547 / Ice1).